The sequence spans 273 residues: Protein OPG070 (273 aa).

The next 2 helical transmembrane spans lie at 123-143 (NEFI…LFWF) and 238-260 (FLLF…EYLM).

The protein belongs to the orthopoxvirus OPG070 family. Post-translationally, phosphorylated by OPG054/F10L kinase in vitro.

The protein localises to the virion. It is found in the host endoplasmic reticulum membrane. Its subcellular location is the host cytoplasm. Functionally, may play a role in the biogenesis of the viral factories by recruiting and wrapping DNA replication sites in endoplasmic reticulum derived membranes. Later in infection, phosphorylation by the late viral kinase OPG054/F10L might decrease DNA-binding ability and trigger ER membranes disassembly. Binds DNA in vitro. The polypeptide is Protein OPG070 (OPG070) (Vaccinia virus (strain Western Reserve) (VACV)).